The sequence spans 199 residues: CASP-like protein 1B2 (199 aa).

The Cytoplasmic portion of the chain corresponds to 1–22 (MALQSEEKLEVGYSSLQPKTRK). A helical transmembrane segment spans residues 23–43 (WVLLMLRVLAFFATAAATVVM). Residues 44–74 (GLNKETKTLVVATVGSTPIKASLAAKFQHTP) are Extracellular-facing. The helical transmembrane segment at 75–95 (AFVFFVIANGLASIHNLVMIM) threads the bilayer. Topologically, residues 96–112 (GDLFGQKLDYKGLRLAM) are cytoplasmic. A helical transmembrane segment spans residues 113–133 (IAILDMMTVALVSGGVSAAAF). The Extracellular portion of the chain corresponds to 134-163 (MAELGKNGNSHARWNKICDKFETFCDHGGG). Residues 164–184 (ALIASFAGLILMLIISVMSII) traverse the membrane as a helical segment. Over 185-199 (KLLIKPKPDSTIVVP) the chain is Cytoplasmic.

This sequence belongs to the Casparian strip membrane proteins (CASP) family. As to quaternary structure, homodimer and heterodimers.

The protein localises to the cell membrane. The sequence is that of CASP-like protein 1B2 from Populus trichocarpa (Western balsam poplar).